The following is a 408-amino-acid chain: Succinylornithine transaminase (408 aa).

Lys-252 is modified (N6-(pyridoxal phosphate)lysine).

The protein belongs to the class-III pyridoxal-phosphate-dependent aminotransferase family. AstC subfamily. Pyridoxal 5'-phosphate serves as cofactor.

The enzyme catalyses N(2)-succinyl-L-ornithine + 2-oxoglutarate = N-succinyl-L-glutamate 5-semialdehyde + L-glutamate. It functions in the pathway amino-acid degradation; L-arginine degradation via AST pathway; L-glutamate and succinate from L-arginine: step 3/5. Catalyzes the transamination of N(2)-succinylornithine and alpha-ketoglutarate into N(2)-succinylglutamate semialdehyde and glutamate. Can also act as an acetylornithine aminotransferase. This is Succinylornithine transaminase from Salmonella paratyphi A (strain ATCC 9150 / SARB42).